Consider the following 798-residue polypeptide: uncharacterized protein (798 aa).

The disordered stretch occupies residues 432 to 573 (KLTDNLSNKS…KNKAYRGRRV (142 aa)). 4 stretches are compositionally biased toward low complexity: residues 438–449 (SNKSSNDNTSET), 456–465 (RSSNSRNSDN), 473–487 (SKTQ…SRIP), and 495–510 (STNS…SDVY). The segment covering 519-529 (PSRSTYKSRTI) has biased composition (polar residues). Over residues 535–547 (ESSPVSSRTSSPV) the composition is skewed to low complexity. Residues 548–562 (DDSRLKQSRISEDKP) are compositionally biased toward basic and acidic residues. Residues 563–572 (RKNKAYRGRR) show a composition bias toward basic residues.

Its subcellular location is the virion. This is an uncharacterized protein from Acanthamoeba polyphaga (Amoeba).